The primary structure comprises 49 residues: Large ribosomal subunit protein bL33B (49 aa).

This sequence belongs to the bacterial ribosomal protein bL33 family.

The polypeptide is Large ribosomal subunit protein bL33B (Geobacillus kaustophilus (strain HTA426)).